The primary structure comprises 418 residues: Serine/threonine-protein kinase Sgk1 (418 aa).

Residues Pro-50–Pro-78 form a disordered region. The segment covering Gln-68–Pro-78 has biased composition (polar residues). One can recognise a Protein kinase domain in the interval Phe-85–Phe-342. ATP-binding positions include Ile-91–Val-99 and Lys-114. Asp-209 acts as the Proton acceptor in catalysis. The AGC-kinase C-terminal domain occupies Ser-343–Leu-418.

The protein belongs to the protein kinase superfamily. AGC Ser/Thr protein kinase family.

It is found in the cytoplasm. The protein resides in the nucleus. It localises to the endoplasmic reticulum. The enzyme catalyses L-seryl-[protein] + ATP = O-phospho-L-seryl-[protein] + ADP + H(+). It carries out the reaction L-threonyl-[protein] + ATP = O-phospho-L-threonyl-[protein] + ADP + H(+). In terms of biological role, protein kinase that may play an important role in cellular stress response. Plays an important role in activating certain potassium, sodium, and chloride channels, suggesting an involvement in the regulation of processes such as cell survival, neuronal excitability, and renal sodium excretion. This chain is Serine/threonine-protein kinase Sgk1 (sgk1), found in Xenopus tropicalis (Western clawed frog).